A 483-amino-acid chain; its full sequence is Glutamyl-tRNA(Gln) amidotransferase subunit A (483 aa).

Active-site charge relay system residues include lysine 76 and serine 151. The Acyl-ester intermediate role is filled by serine 175.

It belongs to the amidase family. GatA subfamily. Heterotrimer of A, B and C subunits.

It carries out the reaction L-glutamyl-tRNA(Gln) + L-glutamine + ATP + H2O = L-glutaminyl-tRNA(Gln) + L-glutamate + ADP + phosphate + H(+). Its function is as follows. Allows the formation of correctly charged Gln-tRNA(Gln) through the transamidation of misacylated Glu-tRNA(Gln) in organisms which lack glutaminyl-tRNA synthetase. The reaction takes place in the presence of glutamine and ATP through an activated gamma-phospho-Glu-tRNA(Gln). The sequence is that of Glutamyl-tRNA(Gln) amidotransferase subunit A from Ectopseudomonas mendocina (strain ymp) (Pseudomonas mendocina).